Here is a 432-residue protein sequence, read N- to C-terminus: Neuronal pentraxin-1 (432 aa).

The signal sequence occupies residues 1 to 22 (MPAGRAARTCALLALCLLGAGA). The tract at residues 90-122 (ESQSTLDPGAGEARAGGGRKQPGSGKNTMGDLS) is disordered. Residues Asn154 and Asn193 are each glycosylated (N-linked (GlcNAc...) asparagine). Positions 226-428 (DKFQLTFPLR…GATKWTFEAC (203 aa)) constitute a Pentraxin (PTX) domain. A disulfide bridge connects residues Cys256 and Cys316. Ca(2+) is bound by residues Asn280, Glu358, Gln359, Asp360, and Gln370.

In terms of assembly, homooligomer or heterooligomer (probably pentamer) with neuronal pentraxin receptor (NPTXR). It depends on Ca(2+) as a cofactor.

The protein resides in the secreted. Its subcellular location is the cytoplasmic vesicle. It localises to the secretory vesicle. The protein localises to the endoplasmic reticulum. Its function is as follows. May be involved in mediating uptake of synaptic material during synapse remodeling or in mediating the synaptic clustering of AMPA glutamate receptors at a subset of excitatory synapses. This is Neuronal pentraxin-1 (NPTX1) from Homo sapiens (Human).